The following is an 87-amino-acid chain: uncharacterized protein (87 aa).

A helical membrane pass occupies residues 44-64 (DALYLAGSTIFTIVTTLVAWF).

Belongs to the SPP1 holin family.

The protein resides in the membrane. This is an uncharacterized protein from Bacillus licheniformis.